The following is a 322-amino-acid chain: Phosphatidylserine decarboxylase proenzyme (322 aa).

Residues Asp-90, His-147, and Ser-254 each act as charge relay system; for autoendoproteolytic cleavage activity in the active site. The Schiff-base intermediate with substrate; via pyruvic acid; for decarboxylase activity role is filled by Ser-254. Ser-254 is subject to Pyruvic acid (Ser); by autocatalysis. The segment at 293–322 (PDAEPAPLPAEEIEAEHDASPLVDDKKDQV) is disordered. Basic and acidic residues predominate over residues 308 to 322 (EHDASPLVDDKKDQV).

The protein belongs to the phosphatidylserine decarboxylase family. PSD-B subfamily. Prokaryotic type I sub-subfamily. In terms of assembly, heterodimer of a large membrane-associated beta subunit and a small pyruvoyl-containing alpha subunit. Pyruvate is required as a cofactor. Post-translationally, is synthesized initially as an inactive proenzyme. Formation of the active enzyme involves a self-maturation process in which the active site pyruvoyl group is generated from an internal serine residue via an autocatalytic post-translational modification. Two non-identical subunits are generated from the proenzyme in this reaction, and the pyruvate is formed at the N-terminus of the alpha chain, which is derived from the carboxyl end of the proenzyme. The autoendoproteolytic cleavage occurs by a canonical serine protease mechanism, in which the side chain hydroxyl group of the serine supplies its oxygen atom to form the C-terminus of the beta chain, while the remainder of the serine residue undergoes an oxidative deamination to produce ammonia and the pyruvoyl prosthetic group on the alpha chain. During this reaction, the Ser that is part of the protease active site of the proenzyme becomes the pyruvoyl prosthetic group, which constitutes an essential element of the active site of the mature decarboxylase.

It localises to the cell membrane. It catalyses the reaction a 1,2-diacyl-sn-glycero-3-phospho-L-serine + H(+) = a 1,2-diacyl-sn-glycero-3-phosphoethanolamine + CO2. The protein operates within phospholipid metabolism; phosphatidylethanolamine biosynthesis; phosphatidylethanolamine from CDP-diacylglycerol: step 2/2. Catalyzes the formation of phosphatidylethanolamine (PtdEtn) from phosphatidylserine (PtdSer). This Escherichia coli O9:H4 (strain HS) protein is Phosphatidylserine decarboxylase proenzyme.